Consider the following 310-residue polypeptide: Protein FAM153A (310 aa).

4 disordered regions span residues 39 to 58, 108 to 136, 156 to 184, and 250 to 297; these read LGVP…LCPP, QTNG…HTME, SYNG…DLEE, and TITG…KKSR. Positions 259–268 are enriched in low complexity; the sequence is SASPSSAPAE. A compositionally biased stretch (basic and acidic residues) spans 270 to 282; sequence ATEKTKVEEEVKT. Residues 283-297 are compositionally biased toward basic residues; it reads RKPKKKTRKPSKKSR.

It belongs to the FAM153 family.

The protein is Protein FAM153A (FAM153A) of Homo sapiens (Human).